A 531-amino-acid chain; its full sequence is Splicing factor ESS-2 (531 aa).

Disordered stretches follow at residues 104–163 (RTPI…RKKK) and 453–531 (PFAS…GDFF). The span at 105 to 114 (TPITTRSTTE) shows a compositional bias: polar residues. 2 stretches are compositionally biased toward low complexity: residues 125–136 (TPGPSSASTSSA) and 464–477 (SRPSSSKRSTTPGS). The segment covering 480–498 (SRGSTTPGSSWSQGAQTPG) has biased composition (polar residues).

This sequence belongs to the ESS2 family.

The protein localises to the nucleus. Functionally, regulates pre-mRNA splicing. This Caenorhabditis elegans protein is Splicing factor ESS-2 (ess-2).